Reading from the N-terminus, the 344-residue chain is UDP-glycosyltransferase 73C4 (344 aa).

UDP-alpha-D-glucose-binding positions include Ser145, 202 to 203, 220 to 228, and 242 to 245; these read WA, HCGWNSSLE, and FAEQ.

Belongs to the UDP-glycosyltransferase family. Expressed in flowers and fruits.

It localises to the cytoplasm. It is found in the nucleus. Its function is as follows. Probable glucosyltransferase that cannot glycosylate abscisic acid (ABA) and auxin (IAA). In Solanum lycopersicum (Tomato), this protein is UDP-glycosyltransferase 73C4.